The sequence spans 408 residues: Cytochrome P450 55A3 (408 aa).

Residue C357 coordinates heme.

This sequence belongs to the cytochrome P450 family. Heme serves as cofactor.

This chain is Cytochrome P450 55A3 (CYP55A3), found in Fusarium lichenicola (Cylindrocarpon lichenicola).